Here is a 235-residue protein sequence, read N- to C-terminus: Phosphoribosylaminoimidazole-succinocarboxamide synthase (235 aa).

This sequence belongs to the SAICAR synthetase family.

It catalyses the reaction 5-amino-1-(5-phospho-D-ribosyl)imidazole-4-carboxylate + L-aspartate + ATP = (2S)-2-[5-amino-1-(5-phospho-beta-D-ribosyl)imidazole-4-carboxamido]succinate + ADP + phosphate + 2 H(+). It functions in the pathway purine metabolism; IMP biosynthesis via de novo pathway; 5-amino-1-(5-phospho-D-ribosyl)imidazole-4-carboxamide from 5-amino-1-(5-phospho-D-ribosyl)imidazole-4-carboxylate: step 1/2. This chain is Phosphoribosylaminoimidazole-succinocarboxamide synthase, found in Streptococcus sanguinis (strain SK36).